A 456-amino-acid polypeptide reads, in one-letter code: B-cell linker protein (456 aa).

The tract at residues 36 to 301 (IKKLKVKAPP…QSPVFPPAQK (266 aa)) is disordered. The span at 57 to 74 (PADEEEQWSDDFDSDYEN) shows a compositional bias: acidic residues. Residues Tyr-72, Tyr-84, Tyr-96, Tyr-178, and Tyr-189 each carry the phosphotyrosine; by SYK modification. Positions 173–187 (EDEADYVVPVEDNDE) are enriched in acidic residues. Positions 212-226 (PNSSTPASPPGTASG) are enriched in low complexity. Positions 236–245 (SPPPAAPSPL) are enriched in pro residues. Residues 251–260 (KPTTPLKTTP) show a composition bias toward low complexity. Positions 271–289 (CEEKPIPAERHRGSSHRQE) are enriched in basic and acidic residues. Residues 346–453 (WYAGACDRKS…KDSTRLKYAV (108 aa)) enclose the SH2 domain.

As to quaternary structure, associates with PLCG1, VAV1 and NCK1 in a B-cell antigen receptor-dependent fashion. Interacts with VAV3, PLCG2 and GRB2. Interacts through its SH2 domain with CD79A. Interacts (via SH2 domain) with SYK; phosphorylated and activated by SYK. Interacts (via SH2 domain) with SCIMP; this interaction is dependent on phosphorylation of SCIMP 'Tyr-131'. Post-translationally, following BCR activation, phosphorylated on tyrosine residues by SYK and LYN. When phosphorylated, serves as a scaffold to assemble downstream targets of antigen activation, including PLCG1, VAV1, GRB2 and NCK1. Phosphorylation of Tyr-84, Tyr-178 and Tyr-189 facilitates PLCG1 binding. Phosphorylation of Tyr-96 facilitates BTK binding. Phosphorylation of Tyr-72 facilitates VAV1 and NCK1 binding. Phosphorylation is required for both Ca(2+) and MAPK signaling pathways. In terms of tissue distribution, expressed in B-cell lineage and fibroblast cell lines (at protein level). Highest levels of expression in the spleen, with lower levels in the liver, kidney, pancreas, small intestines and colon.

The protein localises to the cytoplasm. It is found in the cell membrane. In terms of biological role, functions as a central linker protein, downstream of the B-cell receptor (BCR), bridging the SYK kinase to a multitude of signaling pathways and regulating biological outcomes of B-cell function and development. Plays a role in the activation of ERK/EPHB2, MAP kinase p38 and JNK. Modulates AP1 activation. Important for the activation of NF-kappa-B and NFAT. Plays an important role in BCR-mediated PLCG1 and PLCG2 activation and Ca(2+) mobilization and is required for trafficking of the BCR to late endosomes. However, does not seem to be required for pre-BCR-mediated activation of MAP kinase and phosphatidyl-inositol 3 (PI3) kinase signaling. May be required for the RAC1-JNK pathway. Plays a critical role in orchestrating the pro-B cell to pre-B cell transition. May play an important role in BCR-induced B-cell apoptosis. The chain is B-cell linker protein (BLNK) from Homo sapiens (Human).